We begin with the raw amino-acid sequence, 315 residues long: Methionyl-tRNA formyltransferase (315 aa).

Position 117–120 (117–120) interacts with (6S)-5,6,7,8-tetrahydrofolate; sequence SLLP.

This sequence belongs to the Fmt family.

The catalysed reaction is L-methionyl-tRNA(fMet) + (6R)-10-formyltetrahydrofolate = N-formyl-L-methionyl-tRNA(fMet) + (6S)-5,6,7,8-tetrahydrofolate + H(+). In terms of biological role, attaches a formyl group to the free amino group of methionyl-tRNA(fMet). The formyl group appears to play a dual role in the initiator identity of N-formylmethionyl-tRNA by promoting its recognition by IF2 and preventing the misappropriation of this tRNA by the elongation apparatus. The polypeptide is Methionyl-tRNA formyltransferase (Methylibium petroleiphilum (strain ATCC BAA-1232 / LMG 22953 / PM1)).